The following is a 699-amino-acid chain: Probable xyloglucan glycosyltransferase 12 (699 aa).

Transmembrane regions (helical) follow at residues 126-146 and 194-214; these read CLKVFLWLSLILLGFEIAAYF and IVLFLVQSLDRLILCLGCFWI. The active site involves Asp-280. The substrate site is built by Asp-339 and Asp-341. Asp-433 is an active-site residue. A run of 2 helical transmembrane segments spans residues 511–531 and 536–556; these read LILPFYSFTLFCIILPMTMFV and LPAWVVCYIPATMSFLNILPA. Positions 616–646 are disordered; it reads EKTTKHQRGVSAPETEAEKKAEKTKRKKKKH. Residues Lys-617 and Lys-620 each participate in a glycyl lysine isopeptide (Lys-Gly) (interchain with G-Cter in ubiquitin) cross-link. Phosphoserine is present on Ser-626. Residues 637 to 646 are compositionally biased toward basic residues; it reads EKTKRKKKKH. A run of 2 helical transmembrane segments spans residues 649–668 and 674–694; these read IYMKELSLAFLLLTAATRSL and IHFYFLLFQGISFLLVGLDLI.

This sequence belongs to the glycosyltransferase 2 family. Plant cellulose synthase-like C subfamily. In terms of assembly, homodimer. Mainly expressed in roots, flowers and seeds, and, at very low levels, in seedlings, leaves and stems.

It localises to the golgi apparatus membrane. Its function is as follows. Probable beta-1,4-glucan synthase rather involved in the synthesis of the xyloglucan backbone than cellulose. Seems to work simultaneously with xyloglucan 6-xylosyltransferase. Xyloglucan is a noncellulosic polysaccharides of plant cell wall and consists of a glucan backbone substituted by xylose, galactose and fucose. This chain is Probable xyloglucan glycosyltransferase 12, found in Arabidopsis thaliana (Mouse-ear cress).